The sequence spans 239 residues: Sugar fermentation stimulation protein homolog (239 aa).

This sequence belongs to the SfsA family.

The chain is Sugar fermentation stimulation protein homolog from Mannheimia succiniciproducens (strain KCTC 0769BP / MBEL55E).